Consider the following 255-residue polypeptide: uncharacterized protein (255 aa).

The N-terminal stretch at 1–18 is a signal peptide; that stretch reads MRILIILSIILCSLFTKA.

The protein belongs to the MlaA family.

This is an uncharacterized protein from Rickettsia bellii (strain RML369-C).